The following is a 101-amino-acid chain: Small ribosomal subunit protein uS14A (101 aa).

Composition is skewed to basic and acidic residues over residues 28–44 (KETI…RAEA) and 61–70 (RNRDAADGRP). Positions 28–74 (KETIRRPSSSEDERAEARAALQRLPRDASPVRLRNRDAADGRPRGHL) are disordered.

Belongs to the universal ribosomal protein uS14 family. Part of the 30S ribosomal subunit. Contacts proteins S3 and S10.

Its function is as follows. Binds 16S rRNA, required for the assembly of 30S particles and may also be responsible for determining the conformation of the 16S rRNA at the A site. The chain is Small ribosomal subunit protein uS14A from Rhodococcus jostii (strain RHA1).